The chain runs to 549 residues: Eukaryotic translation initiation factor 3 subunit D-2 (549 aa).

Residues 107 to 157 (ARVKGRSGRGPGMLGVAGSMAGGGTTSGSTKYGKGRESRRNQGRRFARNAP) form a disordered region. The span at 114–132 (GRGPGMLGVAGSMAGGGTT) shows a compositional bias: gly residues. The segment at 288–302 (QFDLLTVNETSLEPP) is RNA gate. The tract at residues 527 to 549 (NSFDSDAEDEENSSEPFANSLDN) is disordered. Acidic residues predominate over residues 529–539 (FDSDAEDEENS).

The protein belongs to the eIF-3 subunit D family. As to quaternary structure, component of the eukaryotic translation initiation factor 3 (eIF-3) complex. The eIF-3 complex interacts with pix.

The protein resides in the cytoplasm. Its function is as follows. mRNA cap-binding component of the eukaryotic translation initiation factor 3 (eIF-3) complex, which is involved in protein synthesis of a specialized repertoire of mRNAs and, together with other initiation factors, stimulates binding of mRNA and methionyl-tRNAi to the 40S ribosome. The eIF-3 complex specifically targets and initiates translation of a subset of mRNAs involved in cell proliferation. In the eIF-3 complex, eif3d specifically recognizes and binds the 7-methylguanosine cap of a subset of mRNAs. The protein is Eukaryotic translation initiation factor 3 subunit D-2 of Drosophila ananassae (Fruit fly).